Consider the following 156-residue polypeptide: Cyclic pyranopterin monophosphate synthase (156 aa).

Residues 75 to 77 (LCH) and 111 to 112 (ME) contribute to the substrate site. Asp-126 is an active-site residue.

It belongs to the MoaC family. As to quaternary structure, homohexamer; trimer of dimers.

The enzyme catalyses (8S)-3',8-cyclo-7,8-dihydroguanosine 5'-triphosphate = cyclic pyranopterin phosphate + diphosphate. Its pathway is cofactor biosynthesis; molybdopterin biosynthesis. Functionally, catalyzes the conversion of (8S)-3',8-cyclo-7,8-dihydroguanosine 5'-triphosphate to cyclic pyranopterin monophosphate (cPMP). In Caulobacter sp. (strain K31), this protein is Cyclic pyranopterin monophosphate synthase.